The sequence spans 83 residues: Mu-theraphotoxin-Hhn2i (83 aa).

An N-terminal signal peptide occupies residues 1 to 21 (MKASMFLALAGLVLLFVVGYA). Residues 22 to 48 (SESEEKEFPRELLSKIFAVDDFKGEER) constitute a propeptide that is removed on maturation. Intrachain disulfides connect Cys-50/Cys-65, Cys-57/Cys-70, and Cys-64/Cys-77. Leu-81 bears the Leucine amide mark.

It belongs to the neurotoxin 10 (Hwtx-1) family. 15 (Hntx-3) subfamily. In terms of assembly, monomer. Expressed by the venom gland.

The protein localises to the secreted. Functionally, lethal neurotoxin. Selectively blocks tetrodotoxin-sensitive voltage-gated sodium channels (Nav). Does not affect tetrodotoxin-resistant voltage-gated sodium channels or calcium channels. The chain is Mu-theraphotoxin-Hhn2i from Cyriopagopus hainanus (Chinese bird spider).